Consider the following 266-residue polypeptide: Apolipoprotein A-I (266 aa).

Positions 1-18 (MKAVVLTLAVLFLTGSQA) are cleaved as a signal peptide. 2 consecutive repeat copies span residues 67–88 (LKLL…EQIG) and 89–110 (PVTQ…QEMN). The 10 X approximate tandem repeats stretch occupies residues 67-266 (LKLLDNWDSL…DEATKKLNAQ (200 aa)). Methionine 109 carries the methionine sulfoxide modification. The stretch at 111 to 121 (KDLEEVKKKVQ) is one 3; half-length repeat. Tandem repeats lie at residues 122-143 (PYLD…QKVA), 144-165 (PLGA…EKLS), 166-187 (PLGE…AQLA), 188-209 (PYSE…EGGG), and 210-231 (ATLT…EKAK). A 9; half-length repeat occupies 232-242 (PALEDLRQGLM). Repeat unit 10 spans residues 243-266 (PVLESFRASLLAAVDEATKKLNAQ).

Belongs to the apolipoprotein A1/A4/E family. Homodimer. Interacts with APOA1BP and CLU. Component of a sperm activating protein complex (SPAP), consisting of APOA1, an immunoglobulin heavy chain, an immunoglobulin light chain and albumin. Interacts with NDRG1. Interacts with SCGB3A2. Interacts with NAXE and YJEFN3. In terms of processing, glycosylated. Post-translationally, palmitoylated. Phosphorylation sites are present in the extracellular medium.

The protein localises to the secreted. Functionally, participates in the reverse transport of cholesterol from tissues to the liver for excretion by promoting cholesterol efflux from tissues and by acting as a cofactor for the lecithin cholesterol acyltransferase (LCAT). As part of the SPAP complex, activates spermatozoa motility. The protein is Apolipoprotein A-I (APOA1) of Phoca vitulina (Harbor seal).